A 37-amino-acid polypeptide reads, in one-letter code: Large ribosomal subunit protein bL36c (37 aa).

The protein belongs to the bacterial ribosomal protein bL36 family.

It is found in the plastid. The protein resides in the chloroplast. The chain is Large ribosomal subunit protein bL36c from Tetradesmus obliquus (Green alga).